The primary structure comprises 153 residues: Insulin-like growth factor 1 (153 aa).

Positions 49–77 (GPETLCGAELVDALQFVCGDRGFYFNKPT) are b. Intrachain disulfides connect cysteine 54/cysteine 96, cysteine 66/cysteine 109, and cysteine 95/cysteine 100. Residues 78–89 (GYGSSSRRAPQT) are c. Residues 90–110 (GIVDECCFRSCDLRRLEMYCA) form an a region. Residues 111–118 (PLKPAKSA) are d. The propeptide at 119–153 (RSVRAQRHTDMPKAQKEVHLKNASRGSAGNKNYRM) is e peptide. A disordered region spans residues 120-153 (SVRAQRHTDMPKAQKEVHLKNASRGSAGNKNYRM). Over residues 125-138 (RHTDMPKAQKEVHL) the composition is skewed to basic and acidic residues. A compositionally biased stretch (polar residues) spans 142-153 (SRGSAGNKNYRM).

The protein belongs to the insulin family. As to quaternary structure, forms a ternary complex with IGFR1 and ITGAV:ITGB3. Forms a ternary complex with IGFR1 and ITGA6:ITGB4. Forms a ternary complex with IGFBP3 and ALS.

It is found in the secreted. Functionally, the insulin-like growth factors, isolated from plasma, are structurally and functionally related to insulin but have a much higher growth-promoting activity. May be a physiological regulator of [1-14C]-2-deoxy-D-glucose (2DG) transport and glycogen synthesis in osteoblasts. Stimulates glucose transport in bone-derived osteoblastic (PyMS) cells and is effective at much lower concentrations than insulin, not only regarding glycogen and DNA synthesis but also with regard to enhancing glucose uptake. May play a role in synapse maturation. Ca(2+)-dependent exocytosis of IGF1 is required for sensory perception of smell in the olfactory bulb. Acts as a ligand for IGF1R. Binds to the alpha subunit of IGF1R, leading to the activation of the intrinsic tyrosine kinase activity which autophosphorylates tyrosine residues in the beta subunit thus initiating a cascade of down-stream signaling events leading to activation of the PI3K-AKT/PKB and the Ras-MAPK pathways. Binds to integrins ITGAV:ITGB3 and ITGA6:ITGB4. Its binding to integrins and subsequent ternary complex formation with integrins and IGFR1 are essential for IGF1 signaling. Induces the phosphorylation and activation of IGFR1, MAPK3/ERK1, MAPK1/ERK2 and AKT1. As part of the MAPK/ERK signaling pathway, acts as a negative regulator of apoptosis in cardiomyocytes via promotion of STUB1/CHIP-mediated ubiquitination and degradation of ICER-type isoforms of CREM. This is Insulin-like growth factor 1 from Ailuropoda melanoleuca (Giant panda).